We begin with the raw amino-acid sequence, 221 residues long: Ribosomal RNA large subunit methyltransferase E (221 aa).

S-adenosyl-L-methionine-binding residues include Gly60, Trp62, Asp89, Asp105, and Asp134. Residue Lys174 is the Proton acceptor of the active site.

The protein belongs to the class I-like SAM-binding methyltransferase superfamily. RNA methyltransferase RlmE family.

The protein resides in the cytoplasm. The catalysed reaction is uridine(2552) in 23S rRNA + S-adenosyl-L-methionine = 2'-O-methyluridine(2552) in 23S rRNA + S-adenosyl-L-homocysteine + H(+). In terms of biological role, specifically methylates the uridine in position 2552 of 23S rRNA at the 2'-O position of the ribose in the fully assembled 50S ribosomal subunit. In Cupriavidus necator (strain ATCC 17699 / DSM 428 / KCTC 22496 / NCIMB 10442 / H16 / Stanier 337) (Ralstonia eutropha), this protein is Ribosomal RNA large subunit methyltransferase E.